The primary structure comprises 258 residues: Imidazole glycerol phosphate synthase subunit HisF (258 aa).

Active-site residues include Asp12 and Asp131.

This sequence belongs to the HisA/HisF family. In terms of assembly, heterodimer of HisH and HisF.

Its subcellular location is the cytoplasm. The enzyme catalyses 5-[(5-phospho-1-deoxy-D-ribulos-1-ylimino)methylamino]-1-(5-phospho-beta-D-ribosyl)imidazole-4-carboxamide + L-glutamine = D-erythro-1-(imidazol-4-yl)glycerol 3-phosphate + 5-amino-1-(5-phospho-beta-D-ribosyl)imidazole-4-carboxamide + L-glutamate + H(+). The protein operates within amino-acid biosynthesis; L-histidine biosynthesis; L-histidine from 5-phospho-alpha-D-ribose 1-diphosphate: step 5/9. IGPS catalyzes the conversion of PRFAR and glutamine to IGP, AICAR and glutamate. The HisF subunit catalyzes the cyclization activity that produces IGP and AICAR from PRFAR using the ammonia provided by the HisH subunit. The polypeptide is Imidazole glycerol phosphate synthase subunit HisF (Arthrobacter sp. (strain FB24)).